The following is a 689-amino-acid chain: Dipeptidyl aminopeptidase BIII (689 aa).

A signal peptide spans 1–26 (MRHPAFRLTLLASTVAFALAPQAAQA). Active-site charge relay system residues include S506, D593, and H625.

Belongs to the peptidase S9C family. Monomer.

With respect to regulation, strongly inhibited by the serine protease inhibitor diisopropyl fluorophosphate (DFP), chymostatin, leupeptin, 0.5 mM ZnCl(2), 10 mM o-phenanthlorine and N-tosyl-L-phenyl-alanyl chloromethyl ketone (TPCK), but not by N-tosyl-L-lysyl chloromethyl ketone (TLCK). Activity is not affected significantly by iodoacetate (IAA), L-trans-epoxysuccinyl-leucylamido(4-guanido)butane (E64), pepstatin A and phenylmethanesulfonyl fluoride (PMSF). Activity is stimulated by addition of 0.5 mM CaCl(2), 10 mM EDTA and N-ethylmaleimide (NEM). Exopeptidase that catalyzes the removal of dipeptide units (NH2-P2-P1- or -P1'-P2'-COOH) from the free amino or carboxy termini. Prefers substrates composed of bulky, hydrophobic amino acids at P1 and P1' positions. Has endopeptidase activity on N-terminally blocked peptide derivatives which contain aromatic amino acid residue at the P1 position. Exopeptidase activity is much higher than its endopeptidase activity. This chain is Dipeptidyl aminopeptidase BIII, found in Pseudoxanthomonas mexicana.